Consider the following 111-residue polypeptide: 2Fe-2S ferredoxin (111 aa).

The 103-residue stretch at 5 to 107 (IKVTFVINNG…GIKVRLPSAT (103 aa)) folds into the 2Fe-2S ferredoxin-type domain. The [2Fe-2S] cluster site is built by cysteine 42, cysteine 48, cysteine 51, and cysteine 88.

This sequence belongs to the adrenodoxin/putidaredoxin family. [2Fe-2S] cluster serves as cofactor.

In terms of biological role, ferredoxin are iron-sulfur proteins that transfer electrons in a wide variety of metabolic reactions. The protein is 2Fe-2S ferredoxin (fdxB) of Rickettsia bellii (strain RML369-C).